We begin with the raw amino-acid sequence, 446 residues long: Phosphoglucosamine mutase (446 aa).

Ser-101 functions as the Phosphoserine intermediate in the catalytic mechanism. Residues Ser-101, Asp-240, Asp-242, and Asp-244 each contribute to the Mg(2+) site. Ser-101 is subject to Phosphoserine.

Belongs to the phosphohexose mutase family. Requires Mg(2+) as cofactor. In terms of processing, activated by phosphorylation.

The catalysed reaction is alpha-D-glucosamine 1-phosphate = D-glucosamine 6-phosphate. Its function is as follows. Catalyzes the conversion of glucosamine-6-phosphate to glucosamine-1-phosphate. This chain is Phosphoglucosamine mutase, found in Coxiella burnetii (strain Dugway 5J108-111).